Reading from the N-terminus, the 157-residue chain is NADPH-dependent 7-cyano-7-deazaguanine reductase (157 aa).

Cys55 serves as the catalytic Thioimide intermediate. The active-site Proton donor is the Asp62. Substrate-binding positions include 77–79 and 96–97; these read VES and HE.

This sequence belongs to the GTP cyclohydrolase I family. QueF type 1 subfamily.

Its subcellular location is the cytoplasm. It carries out the reaction 7-aminomethyl-7-carbaguanine + 2 NADP(+) = 7-cyano-7-deazaguanine + 2 NADPH + 3 H(+). The protein operates within tRNA modification; tRNA-queuosine biosynthesis. Its function is as follows. Catalyzes the NADPH-dependent reduction of 7-cyano-7-deazaguanine (preQ0) to 7-aminomethyl-7-deazaguanine (preQ1). The chain is NADPH-dependent 7-cyano-7-deazaguanine reductase from Neisseria meningitidis serogroup C / serotype 2a (strain ATCC 700532 / DSM 15464 / FAM18).